We begin with the raw amino-acid sequence, 952 residues long: Lysosomal alpha-glucosidase (952 aa).

The first 27 residues, 1 to 27, serve as a signal peptide directing secretion; the sequence is MGVRHPPCSHRLLAVCALVSLATAALL. Positions 28–69 are excised as a propeptide; sequence GHILLHDFLLVPRELSGSSPVLEETHPAHQQGASRPGPRDAQ. The interval 47 to 82 is disordered; the sequence is PVLEETHPAHQQGASRPGPRDAQAHPGRPRAVPTQC. In terms of domain architecture, P-type spans 80-131; it reads TQCDVPPNSRFDCAPDKAITQEQCEARGCCYIPAKQGLQGAQMGQPWCFFPP. 3 disulfide bridges follow: Cys82/Cys109, Cys92/Cys108, and Cys103/Cys127. Residues Asn140, Asn233, and Asn390 are each glycosylated (N-linked (GlcNAc...) asparagine). Asp404 contributes to the substrate binding site. Residue Asn470 is glycosylated (N-linked (GlcNAc...) asparagine). Asp518 (nucleophile) is an active-site residue. The active site involves Glu521. A disulfide bridge connects residues Cys533 and Cys558. Residues Arg600 and Asp616 each coordinate substrate. A disulfide bridge connects residues Cys647 and Cys658. N-linked (GlcNAc...) asparagine glycosylation is present at Asn652. His674 serves as a coordination point for substrate. Residues Asn882 and Asn925 are each glycosylated (N-linked (GlcNAc...) asparagine).

This sequence belongs to the glycosyl hydrolase 31 family. The different forms of acid glucosidase are obtained by proteolytic processing. Post-translationally, phosphorylation of mannose residues ensures efficient transport of the enzyme to the lysosomes via the mannose 6-phosphate receptor.

It is found in the lysosome. Its subcellular location is the lysosome membrane. The enzyme catalyses Hydrolysis of terminal, non-reducing (1-&gt;4)-linked alpha-D-glucose residues with release of alpha-D-glucose.. In terms of biological role, essential for the degradation of glycogen in lysosomes. Has highest activity on alpha-1,4-linked glycosidic linkages, but can also hydrolyze alpha-1,6-linked glucans. This Homo sapiens (Human) protein is Lysosomal alpha-glucosidase (GAA).